The following is a 479-amino-acid chain: Aspartyl/glutamyl-tRNA(Asn/Gln) amidotransferase subunit B (479 aa).

This sequence belongs to the GatB/GatE family. GatB subfamily. In terms of assembly, heterotrimer of A, B and C subunits.

The enzyme catalyses L-glutamyl-tRNA(Gln) + L-glutamine + ATP + H2O = L-glutaminyl-tRNA(Gln) + L-glutamate + ADP + phosphate + H(+). It carries out the reaction L-aspartyl-tRNA(Asn) + L-glutamine + ATP + H2O = L-asparaginyl-tRNA(Asn) + L-glutamate + ADP + phosphate + 2 H(+). Functionally, allows the formation of correctly charged Asn-tRNA(Asn) or Gln-tRNA(Gln) through the transamidation of misacylated Asp-tRNA(Asn) or Glu-tRNA(Gln) in organisms which lack either or both of asparaginyl-tRNA or glutaminyl-tRNA synthetases. The reaction takes place in the presence of glutamine and ATP through an activated phospho-Asp-tRNA(Asn) or phospho-Glu-tRNA(Gln). In Streptococcus pyogenes serotype M28 (strain MGAS6180), this protein is Aspartyl/glutamyl-tRNA(Asn/Gln) amidotransferase subunit B.